A 442-amino-acid chain; its full sequence is F-box protein KIB2 (442 aa).

The region spanning 62–109 (SKQPVLVLDLLRSILERLSFVDFHRGRCISLEWYSASESCLAVKNPTS) is the F-box domain. The short motif at 236–243 (HKKGDENY) is the Nuclear localization signal element.

As to quaternary structure, interacts with ASK7/BIN2/SK21.

The protein localises to the cytoplasm. It is found in the nucleus. The protein resides in the nucleolus. Functionally, component of SCF(ASK-cullin-F-box) E3 ubiquitin ligase complexes, which may mediate the ubiquitination and subsequent proteasomal degradation of target proteins. Required for brassinosteroid (BR) signal transduction. Mediates ASK7/BIN2/SK21 inactivation both by competing with substrate binding (e.g. BZR1) and by promoting its ubiquitination and subsequent proteasomal degradation. The protein is F-box protein KIB2 of Arabidopsis thaliana (Mouse-ear cress).